The following is a 199-amino-acid chain: Ribonuclease HII (199 aa).

The RNase H type-2 domain occupies 10–199; the sequence is RIEAGCDEAG…LLPEQLTLGF (190 aa). A divalent metal cation contacts are provided by D16, E17, and D108.

The protein belongs to the RNase HII family. Mn(2+) is required as a cofactor. Requires Mg(2+) as cofactor.

Its subcellular location is the cytoplasm. The enzyme catalyses Endonucleolytic cleavage to 5'-phosphomonoester.. Endonuclease that specifically degrades the RNA of RNA-DNA hybrids. The chain is Ribonuclease HII from Parabacteroides distasonis (strain ATCC 8503 / DSM 20701 / CIP 104284 / JCM 5825 / NCTC 11152).